The following is a 327-amino-acid chain: GMP reductase (327 aa).

Residue Cys-176 is the Thioimidate intermediate of the active site. 205 to 228 lines the NADP(+) pocket; sequence IIADGGIRTHGDIAKSIRFGASMV.

This sequence belongs to the IMPDH/GMPR family. GuaC type 2 subfamily.

The catalysed reaction is IMP + NH4(+) + NADP(+) = GMP + NADPH + 2 H(+). Functionally, catalyzes the irreversible NADPH-dependent deamination of GMP to IMP. It functions in the conversion of nucleobase, nucleoside and nucleotide derivatives of G to A nucleotides, and in maintaining the intracellular balance of A and G nucleotides. This is GMP reductase from Streptococcus agalactiae serotype Ia (strain ATCC 27591 / A909 / CDC SS700).